The sequence spans 204 residues: Nascent polypeptide-associated complex subunit alpha (204 aa).

Over residues 1–19 (MADPRVEELPDEEVPKTNV) the composition is skewed to basic and acidic residues. Disordered stretches follow at residues 1–48 (MADP…HSRN) and 119–167 (LAAA…GLEA). Residues 22–32 (AGSDSESEAGE) are compositionally biased toward acidic residues. Residues 46–111 (SRNEKKARKA…AKIEDLNSQA (66 aa)) form the NAC-A/B domain. A compositionally biased stretch (low complexity) spans 119–128 (LAAAEAAAGE). Residues 129 to 151 (HAGHDHDHDHGKGKAPETEAKKE) show a composition bias toward basic and acidic residues. Residues 152–164 (EEEDDGEEVDETG) show a composition bias toward acidic residues. Residues 165–204 (LEAKDIELVMAQANVSRKKAVKALRENDNDIVNSIMALSI) enclose the UBA domain.

The protein belongs to the NAC-alpha family. As to quaternary structure, part of the nascent polypeptide-associated complex (NAC), consisting of egd2 and egd1. NAC associates with ribosomes via egd1.

It is found in the cytoplasm. It localises to the nucleus. Component of the nascent polypeptide-associated complex (NAC), a dynamic component of the ribosomal exit tunnel, protecting the emerging polypeptides from interaction with other cytoplasmic proteins to ensure appropriate nascent protein targeting. The NAC complex also promotes mitochondrial protein import by enhancing productive ribosome interactions with the outer mitochondrial membrane and blocks the inappropriate interaction of ribosomes translating non-secretory nascent polypeptides with translocation sites in the membrane of the endoplasmic reticulum. Egd2 may also be involved in transcription regulation. This chain is Nascent polypeptide-associated complex subunit alpha (egd2), found in Aspergillus clavatus (strain ATCC 1007 / CBS 513.65 / DSM 816 / NCTC 3887 / NRRL 1 / QM 1276 / 107).